A 191-amino-acid polypeptide reads, in one-letter code: dTTP/UTP pyrophosphatase (191 aa).

Catalysis depends on Asp64, which acts as the Proton acceptor.

The protein belongs to the Maf family. YhdE subfamily. Requires a divalent metal cation as cofactor.

The protein localises to the cytoplasm. It carries out the reaction dTTP + H2O = dTMP + diphosphate + H(+). The enzyme catalyses UTP + H2O = UMP + diphosphate + H(+). In terms of biological role, nucleoside triphosphate pyrophosphatase that hydrolyzes dTTP and UTP. May have a dual role in cell division arrest and in preventing the incorporation of modified nucleotides into cellular nucleic acids. The polypeptide is dTTP/UTP pyrophosphatase (Thermosipho africanus (strain TCF52B)).